The chain runs to 748 residues: MTTEAKCPFNHAVVGTGTTNRDWWPKQLRVDLLSQHSSKSNPLDPSFNYADAFKHLDLQALKQDLHALMTDSQDWWPADFGHYGPLFVRMAWHSAGTYRIGDGRGGGGRGQQRFAPLNSWPDNVSLDKARRLLWPIKQKYGQAISWADLMILTGNVALESMGLKTFGFAGGREDTWEPDQDLYWGRETKWLGGDERYSRGSPGVDEAHGVLVKDDDSQVPHTRDLENPLAAVQMGLIYVNPEGPDGNPDPIASARDIRDTFARMAMNDEETVALIAGGHTFGKTHGAGPADYVGAEPEAGELESQGFGWHNRYGSGKGADTITSGLEVTWTTTPAQWSNDYFDHLFGFEWELSKSPAGAHQWVAKNADAIIPDAHDASRKHRPTMLTTDLALRFDPAYEAISRRFQQHPEQFADAFARAWFKLTHRDMGPRARYLGADVPAEELVWQDPVPAVDHALVDAQDAAALKQTILASGLSVAHLVSTAWASASTFRGSDKRGGANGARIRLAPQKEWQANQPEQLAKVLATLERIQADFNAAQSGGKKISLADLVVLAGNAAVEHAAQAAGHQVTVPFAPGRTDASQEQTDVESFAVLEPVADGFRNFAKRRYAVPAEALLIDKAQLLTLTAPELTVLVGGLRVLGANVGDSKHGVFTSRPGVLSNDFFANLLDMRTEWKATSEAKEVFEGRDRSTGELRWTGTRVDLVFGSNSILRAVAEVYASADAQEKFVHDFVAAWTKVMQLDRFDLA.

The tryptophyl-tyrosyl-methioninium (Trp-Tyr) (with M-264) cross-link spans 92–238 (WHSAGTYRIG…LAAVQMGLIY (147 aa)). H93 (proton acceptor) is an active-site residue. Positions 238-264 (YVNPEGPDGNPDPIASARDIRDTFARM) form a cross-link, tryptophyl-tyrosyl-methioninium (Tyr-Met) (with W-92). H279 contributes to the heme b binding site.

This sequence belongs to the peroxidase family. Peroxidase/catalase subfamily. As to quaternary structure, homodimer or homotetramer. The cofactor is heme b. Post-translationally, formation of the three residue Trp-Tyr-Met cross-link is important for the catalase, but not the peroxidase activity of the enzyme.

The enzyme catalyses H2O2 + AH2 = A + 2 H2O. It catalyses the reaction 2 H2O2 = O2 + 2 H2O. Bifunctional enzyme with both catalase and broad-spectrum peroxidase activity. The polypeptide is Catalase-peroxidase (Xanthomonas axonopodis pv. citri (strain 306)).